A 284-amino-acid chain; its full sequence is 3-methyl-2-oxobutanoate hydroxymethyltransferase (284 aa).

The Mg(2+) site is built by aspartate 44 and aspartate 83. 3-methyl-2-oxobutanoate contacts are provided by residues 44–45 (DS), aspartate 83, and lysine 112. Glutamate 114 contributes to the Mg(2+) binding site. The active-site Proton acceptor is the glutamate 181.

Belongs to the PanB family. As to quaternary structure, homodecamer; pentamer of dimers. Requires Mg(2+) as cofactor.

It localises to the cytoplasm. The enzyme catalyses 3-methyl-2-oxobutanoate + (6R)-5,10-methylene-5,6,7,8-tetrahydrofolate + H2O = 2-dehydropantoate + (6S)-5,6,7,8-tetrahydrofolate. Its pathway is cofactor biosynthesis; coenzyme A biosynthesis. Neither activated nor inhibited by coenzyme A. Catalyzes the reversible reaction in which hydroxymethyl group from 5,10-methylenetetrahydrofolate is transferred onto alpha-ketoisovalerate to form ketopantoate. This Thermococcus kodakarensis (strain ATCC BAA-918 / JCM 12380 / KOD1) (Pyrococcus kodakaraensis (strain KOD1)) protein is 3-methyl-2-oxobutanoate hydroxymethyltransferase.